An 83-amino-acid polypeptide reads, in one-letter code: Hainantoxin-III 12 (83 aa).

Residues 1–21 (MKASMFLALAGLVLLFVVGYA) form the signal peptide. Positions 22-48 (SGSEEKEFPRELLSKIFAVDDFKGEER) are excised as a propeptide. Intrachain disulfides connect C50–C65, C57–C70, and C64–C77. Residue L81 is modified to Leucine amide.

The protein belongs to the neurotoxin 10 (Hwtx-1) family. 15 (Hntx-3) subfamily. In terms of assembly, monomer. As to expression, expressed by the venom gland.

Its subcellular location is the secreted. Selective antagonist of neuronal tetrodotoxin (TTX)-sensitive voltage-gated sodium channels (IC(50)=1270 nM on Nav1.1/SCN1A, 270 nM on Nav1.2/SCN2A, 491 nM on Nav1.3/SCN3A and 232 nM on Nav1.7/SCN9A). This toxin suppress Nav1.7 current amplitude without significantly altering the activation, inactivation, and repriming kinetics. Short extreme depolarizations partially activate the toxin-bound channel, indicating voltage-dependent inhibition of this toxin. This toxin increases the deactivation of the Nav1.7 current after extreme depolarizations. The toxin-Nav1.7 complex is gradually dissociated upon prolonged strong depolarizations in a voltage-dependent manner, and the unbound toxin rebinds to Nav1.7 after a long repolarization. Moreover, analysis of chimeric channels showed that the DIIS3-S4 linker is critical for toxin binding to Nav1.7. These data are consistent with this toxin interacting with Nav1.7 site 4 and trapping the domain II voltage sensor in the closed state. The polypeptide is Hainantoxin-III 12 (Cyriopagopus hainanus (Chinese bird spider)).